A 367-amino-acid polypeptide reads, in one-letter code: 2-aminoethylphosphonate--pyruvate transaminase (367 aa).

At K194 the chain carries N6-(pyridoxal phosphate)lysine.

Belongs to the class-V pyridoxal-phosphate-dependent aminotransferase family. PhnW subfamily. In terms of assembly, homodimer. Pyridoxal 5'-phosphate serves as cofactor.

The enzyme catalyses (2-aminoethyl)phosphonate + pyruvate = phosphonoacetaldehyde + L-alanine. Involved in phosphonate degradation. This Salmonella choleraesuis (strain SC-B67) protein is 2-aminoethylphosphonate--pyruvate transaminase.